Consider the following 557-residue polypeptide: UvrABC system protein C (557 aa).

The GIY-YIG domain occupies 14–89; that stretch reads EEPGVYIFKN…IKKYRPKYNV (76 aa). A UVR domain is found at 194 to 229; sequence EEVFDYLKEKMETHSKMLDFENAAKYRDLLLNLSNV.

Belongs to the UvrC family. Interacts with UvrB in an incision complex.

The protein resides in the cytoplasm. Its function is as follows. The UvrABC repair system catalyzes the recognition and processing of DNA lesions. UvrC both incises the 5' and 3' sides of the lesion. The N-terminal half is responsible for the 3' incision and the C-terminal half is responsible for the 5' incision. The protein is UvrABC system protein C of Thermotoga sp. (strain RQ2).